Consider the following 757-residue polypeptide: RNA-directed RNA polymerase catalytic subunit (757 aa).

The tract at residues 53 to 82 (GRWTTNTETGAPQLNPIDGPLPEDNEPSGY) is disordered. The segment covering 55–64 (WTTNTETGAP) has biased composition (polar residues). Short sequence motifs (nuclear localization signal) lie at residues 187–195 (RKRRVRDNM) and 203–216 (RTMG…NKRS). A promoter-binding site region spans residues 249 to 256 (RGFVYFVE). The 198-residue stretch at 286 to 483 (VRKMMTNSQD…GINMSKKKSY (198 aa)) folds into the RdRp catalytic domain.

The protein belongs to the influenza viruses polymerase PB1 family. In terms of assembly, influenza RNA polymerase is composed of three subunits: PB1, PB2 and PA. Interacts (via N-terminus) with PA (via C-terminus). Interacts (via C-terminus) with PB2 (via N-terminus); this interaction is essential for transcription initiation. Phosphorylated by host PRKCA.

The protein resides in the host nucleus. The protein localises to the host cytoplasm. It catalyses the reaction RNA(n) + a ribonucleoside 5'-triphosphate = RNA(n+1) + diphosphate. In terms of biological role, RNA-dependent RNA polymerase which is responsible for replication and transcription of virus RNA segments. The transcription of viral mRNAs occurs by a unique mechanism called cap-snatching. 5' methylated caps of cellular mRNAs are cleaved after 10-13 nucleotides by PA. In turn, these short capped RNAs are used as primers by PB1 for transcription of viral mRNAs. During virus replication, PB1 initiates RNA synthesis and copy vRNA into complementary RNA (cRNA) which in turn serves as a template for the production of more vRNAs. The chain is RNA-directed RNA polymerase catalytic subunit from Aves (whales).